Consider the following 509-residue polypeptide: Putative ATP-dependent RNA helicase QP509L (509 aa).

The region spanning 110-262 (KKLLSPYGRF…KIILHHLGQP (153 aa)) is the Helicase ATP-binding domain. Residue 123 to 130 (LNTGLGKT) coordinates ATP. Residues 215–218 (DEAH) carry the DEAH box motif.

This sequence belongs to the DEAD box helicase family. DEAH subfamily.

It carries out the reaction ATP + H2O = ADP + phosphate + H(+). In Ornithodoros (relapsing fever ticks), this protein is Putative ATP-dependent RNA helicase QP509L.